Reading from the N-terminus, the 1166-residue chain is Serine/threonine-protein kinase BRI1-like 1 (1166 aa).

The N-terminal stretch at 1 to 21 (MKQRWLLVLILCFFTTSLVMG) is a signal peptide. At 22–776 (IHGKHLINDD…IHAKKQTVAT (755 aa)) the chain is on the extracellular side. N-linked (GlcNAc...) asparagine glycosylation occurs at N33. Residues 66-73 (CSWRGVSC) carry the Cys pair 1 motif. LRR repeat units follow at residues 78–99 (RIVG…VNLT), 103–124 (NLQN…SGSD), 126–147 (YLQV…DYVF), 152–173 (NLVS…APSS), 176–197 (SLTT…SFIS), 202–224 (SLKY…SFGI), 227–248 (NLTF…ITLP), 252–274 (FLET…EYWG), 278–300 (NLKQ…LSLL), 303–325 (TLVI…FTAC), 327–349 (WLQN…VVSK), 352–375 (GITY…TNCS), 376–397 (NLRV…GFCS), 403–424 (VLEK…ELGK), 427–449 (SLKT…IWML), 451–473 (NLSD…VCVK), 476–498 (NLET…ISRC), 500–522 (NMIW…IGNL), 524–547 (KLAI…GNCK), and 548–570 (SLIW…LASQ). Residue N97 is glycosylated (N-linked (GlcNAc...) asparagine). An N-linked (GlcNAc...) asparagine glycan is attached at N157. Residues N212, N227, N237, and N257 are each glycosylated (N-linked (GlcNAc...) asparagine). N-linked (GlcNAc...) asparagine glycans are attached at residues N362 and N373. N-linked (GlcNAc...) asparagine glycans are attached at residues N451 and N461. N-linked (GlcNAc...) asparagine glycosylation is found at N521, N532, N558, and N638. 3 LRR repeats span residues 664 to 686 (YLQV…FGGL), 688 to 710 (AIGV…LGSL), and 712 to 734 (FLSD…GQLT). N-linked (GlcNAc...) asparagine glycans are attached at residues N722 and N743. Residues 748–755 (CGVPLRPC) carry the Cys pair 2 motif. A helical transmembrane segment spans residues 777–797 (AVIAGIAFSFMCFVMLVMALY). The Cytoplasmic segment spans residues 798–1166 (RVRKVQKKEQ…LVEESRDKEP (369 aa)). Residues T848 and T856 each carry the phosphothreonine modification. One can recognise a Protein kinase domain in the interval 859–1147 (FSAETMVGSG…KADTEEDESL (289 aa)). Residues 865–873 (VGSGGFGEV) and K887 contribute to the ATP site. Y932 carries the phosphotyrosine modification. The active-site Proton acceptor is the D987. S1022 carries the post-translational modification Phosphoserine. Phosphotyrosine is present on Y1030. A Phosphothreonine modification is found at T1141. The interval 1142 to 1166 (EEDESLDEFSLKETPLVEESRDKEP) is disordered.

It belongs to the protein kinase superfamily. Ser/Thr protein kinase family. In terms of tissue distribution, predominantly expressed in vascular tissues. From 7 day old seedlings, it is expressed in the columella cells of the root tip, in the vascular initials in the meristematic region of the root and in vascular tissues. After germination, it is expressed in the stele cell and in the early differentiation zone of the root, where the expression continues from the root to the hypocotyls and cotyledons following the midvein. In mature plants, it is expressed in the vasculature of the leaf, predominantly in the midvein, and in the vascular bundles of inflorescence stems. Localizes to procambial cells of the vascular bundles located between the differentiating xylem and the phloem.

It localises to the cell membrane. The enzyme catalyses L-seryl-[protein] + ATP = O-phospho-L-seryl-[protein] + ADP + H(+). The catalysed reaction is L-threonyl-[protein] + ATP = O-phospho-L-threonyl-[protein] + ADP + H(+). Functionally, receptor with a serine/threonine-protein kinase activity. Regulates, in response to brassinosteroid binding, a signaling cascade involved in plant development. Binds brassinolide. May be involved in cell growth and vascular differentiation. The chain is Serine/threonine-protein kinase BRI1-like 1 (BRL1) from Arabidopsis thaliana (Mouse-ear cress).